Here is a 121-residue protein sequence, read N- to C-terminus: Large ribosomal subunit protein bL20 (121 aa).

Belongs to the bacterial ribosomal protein bL20 family.

Functionally, binds directly to 23S ribosomal RNA and is necessary for the in vitro assembly process of the 50S ribosomal subunit. It is not involved in the protein synthesizing functions of that subunit. In Francisella tularensis subsp. mediasiatica (strain FSC147), this protein is Large ribosomal subunit protein bL20.